We begin with the raw amino-acid sequence, 518 residues long: ESX-3 secretion system ATPase EccB3 (518 aa).

The disordered stretch occupies residues 1-26 (MTGPVNPDDRRSFSSRTPVNENPDGV). The helical transmembrane segment at 71–91 (VLTGALILVTGLVGCFIFSLF) threads the bilayer.

It belongs to the EccB family. In terms of assembly, part of the ESX-3 / type VII secretion system (T7SS), which is composed of cytosolic and membrane components. The ESX-3 membrane complex is composed of EccB3, EccC3, EccD3 and EccE3.

Its subcellular location is the cell inner membrane. An ATPase. Part of the ESX-3 specialized secretion system, which is required for siderophore-mediated iron acquisition and for the secretion of EsxH and EsxG. The protein is ESX-3 secretion system ATPase EccB3 of Mycolicibacterium smegmatis (strain ATCC 700084 / mc(2)155) (Mycobacterium smegmatis).